The primary structure comprises 109 residues: Cortistatin (109 aa).

The N-terminal stretch at 1 to 25 (MMGGRGTGGKWPSAFGLLLLWGVAA) is a signal peptide. Residues 26-93 (SALPLESGPT…PPPQQPPHLD (68 aa)) constitute a propeptide that is removed on maturation. The tract at residues 64 to 97 (ASSSTPVGGGTPGLSKSQERPPPQQPPHLDKKPC) is disordered. Residues Cys-97 and Cys-108 are joined by a disulfide bond.

This sequence belongs to the somatostatin family. In terms of tissue distribution, expressed in a subset of GABAergic cells in the cortex and hippocampus.

The protein resides in the secreted. The protein is Cortistatin (Cort) of Mus musculus (Mouse).